A 1657-amino-acid polypeptide reads, in one-letter code: A disintegrin and metalloproteinase with thrombospondin motifs 7 (1657 aa).

The signal sequence occupies residues 1 to 20 (MHRGPSLLLILCALASRVLG). Positions 21 to 220 (PASGLVTEGR…QQQQKRRQQR (200 aa)) are excised as a propeptide. N-linked (GlcNAc...) asparagine glycosylation occurs at asparagine 84. The disordered stretch occupies residues 165-221 (PGHAQPHVVYKHQGSRKQAQQGDSRPSGTCGMQVPPDLEQQREHWEQQQQKRRQQRS). The segment covering 180 to 191 (RKQAQQGDSRPS) has biased composition (polar residues). Positions 192–199 (GTCGMQVP) match the Cysteine switch motif. Zn(2+) is bound at residue cysteine 194. Positions 226–437 (KWVETLVVAD…GWGLCLDDRP (212 aa)) constitute a Peptidase M12B domain. 11 cysteine pairs are disulfide-bonded: cysteine 302-cysteine 356, cysteine 331-cysteine 338, cysteine 350-cysteine 432, cysteine 389-cysteine 416, cysteine 459-cysteine 482, cysteine 470-cysteine 488, cysteine 477-cysteine 507, cysteine 501-cysteine 512, cysteine 535-cysteine 572, cysteine 539-cysteine 577, and cysteine 550-cysteine 562. Position 372 (histidine 372) interacts with Zn(2+). The active site involves glutamate 373. Histidine 376 and histidine 382 together coordinate Zn(2+). The Disintegrin domain maps to 447–522 (VLPGVLYDVN…VPEGFQPEAV (76 aa)). A TSP type-1 1 domain is found at 523-578 (DGGWSGWSAWSDCSRSCGVGVRSSERQCTQPVPKNRGKYCVGERKRSQLCNLPACP). Asparagine 622 carries N-linked (GlcNAc...) asparagine glycosylation. Residues 683–794 (QTVSRTFKET…PGVHYQYTIQ (112 aa)) form a spacer region. 3 TSP type-1 domains span residues 804–863 (PEFS…EPCP), 864–923 (PRWW…NRHV), and 925–978 (CPST…QPCQ). Disordered stretches follow at residues 1009–1034 (LAPR…EELD), 1073–1127 (GGWT…GLEQ), 1140–1237 (EDTP…DVVE), 1283–1304 (GRDS…SSQH), and 1317–1384 (TVPT…ARNA). Pro residues predominate over residues 1211-1224 (PQSPIPTQPSPPSI). Composition is skewed to polar residues over residues 1293 to 1304 (PTFSSPELSSQH) and 1327 to 1342 (PSGQ…TQSP). 4 consecutive TSP type-1 domains span residues 1366 to 1414 (QPSL…SGND), 1417 to 1477 (CTLA…CQPG), 1479 to 1522 (TKPP…PEPG), and 1524 to 1584 (CEES…LCSH). Positions 1587 to 1627 (WPESSRPCATEDCELVEPPRCERDRLSFNFCETLRLLGRCQ) constitute a PLAC domain.

In terms of assembly, interacts with COMP. The cofactor is Zn(2+). In terms of processing, N-glycosylated. Can be O-fucosylated by POFUT2 on a serine or a threonine residue found within the consensus sequence C1-X(2)-(S/T)-C2-G of the TSP type-1 repeat domains where C1 and C2 are the first and second cysteine residue of the repeat, respectively. Fucosylated repeats can then be further glycosylated by the addition of a beta-1,3-glucose residue by the glucosyltransferase, B3GALTL. Fucosylation mediates the efficient secretion of ADAMTS family members. Can also be C-glycosylated with one or two mannose molecules on tryptophan residues within the consensus sequence W-X-X-W of the TPRs. N- and C-glycosylations can also facilitate secretion. O-glycosylated proteoglycan; contains chondroitin sulfate. Post-translationally, may be cleaved by a furin endopeptidase. The precursor is sequentially processed.

Its subcellular location is the secreted. It is found in the extracellular space. It localises to the extracellular matrix. In terms of biological role, metalloprotease. Was previously shown to degrade COMP. However, a later study found no activity against COMP. The sequence is that of A disintegrin and metalloproteinase with thrombospondin motifs 7 (Adamts7) from Mus musculus (Mouse).